A 170-amino-acid chain; its full sequence is Small ribosomal subunit protein bS16 (170 aa).

The interval E114–S170 is disordered. The segment covering P142 to S170 has biased composition (low complexity).

The protein belongs to the bacterial ribosomal protein bS16 family.

The protein is Small ribosomal subunit protein bS16 of Mycobacterium avium (strain 104).